A 283-amino-acid chain; its full sequence is Thymidylate synthase (283 aa).

Arg22 contributes to the dUMP binding site. The Nucleophile role is filled by Cys160. DUMP-binding positions include 180–183 (RSCD), Asn191, and 221–223 (HIY). Asp183 serves as a coordination point for (6R)-5,10-methylene-5,6,7,8-tetrahydrofolate. Ser282 provides a ligand contact to (6R)-5,10-methylene-5,6,7,8-tetrahydrofolate.

The protein belongs to the thymidylate synthase family. Bacterial-type ThyA subfamily. As to quaternary structure, homodimer.

Its subcellular location is the cytoplasm. It carries out the reaction dUMP + (6R)-5,10-methylene-5,6,7,8-tetrahydrofolate = 7,8-dihydrofolate + dTMP. The protein operates within pyrimidine metabolism; dTTP biosynthesis. Catalyzes the reductive methylation of 2'-deoxyuridine-5'-monophosphate (dUMP) to 2'-deoxythymidine-5'-monophosphate (dTMP) while utilizing 5,10-methylenetetrahydrofolate (mTHF) as the methyl donor and reductant in the reaction, yielding dihydrofolate (DHF) as a by-product. This enzymatic reaction provides an intracellular de novo source of dTMP, an essential precursor for DNA biosynthesis. This chain is Thymidylate synthase, found in Haemophilus influenzae (strain PittGG).